The following is a 262-amino-acid chain: Glutamate racemase (262 aa).

Residues 7 to 8 (DS) and 39 to 40 (YG) each bind substrate. C70 acts as the Proton donor/acceptor in catalysis. 71–72 (NT) provides a ligand contact to substrate. C182 serves as the catalytic Proton donor/acceptor. 183-184 (TH) provides a ligand contact to substrate.

The protein belongs to the aspartate/glutamate racemases family.

The catalysed reaction is L-glutamate = D-glutamate. Its pathway is cell wall biogenesis; peptidoglycan biosynthesis. Provides the (R)-glutamate required for cell wall biosynthesis. This is Glutamate racemase from Campylobacter concisus (strain 13826).